Here is an 899-residue protein sequence, read N- to C-terminus: Plasma membrane ATPase (899 aa).

The tract at residues 1-72 (MSAATEPTKE…TDPSYGLTSD (72 aa)) is disordered. Topologically, residues 1-96 (MSAATEPTKE…SEETENLFVK (96 aa)) are cytoplasmic. The segment covering 17 to 29 (DSDDEDEDIDQLI) has biased composition (acidic residues). A helical transmembrane segment spans residues 97–117 (FLMFFIGPIQFVMEAAAILAA). The Extracellular portion of the chain corresponds to 118–121 (GLED). A helical transmembrane segment spans residues 122-141 (WVDFGVICGLLFLNAAVGFI). Residues 142-272 (QEYQAGSIVD…GSGHFTEVLN (131 aa)) lie on the Cytoplasmic side of the membrane. Residues 273-294 (GIGTILLILVIVTLLLVWVASF) traverse the membrane as a helical segment. At 295 to 305 (YRTNKIVRILR) the chain is on the extracellular side. The chain crosses the membrane as a helical span at residues 306-328 (YTLAITIVGVPVGLPAVVTTTMA). Over 329 to 700 (VGAAYLAKKQ…IAILNRSLNI (372 aa)) the chain is Cytoplasmic. D359 (4-aspartylphosphate intermediate) is an active-site residue. 2 residues coordinate Mg(2+): D615 and D619. Residues 701–719 (DLVVFIAIFADVATLAIAY) traverse the membrane as a helical segment. The Extracellular portion of the chain corresponds to 720–735 (DNAPYSPKPVKWNLRR). A helical membrane pass occupies residues 736–755 (LWGMSVILGIILAIGTWITL). At 756 to 805 (TTMFVPKGGIIQNFGSIDGVLFLQISLTENWLIFITRAAGPFWSSIPSWQ) the chain is on the cytoplasmic side. A helical transmembrane segment spans residues 806–826 (LSGAVLIVDIIATMFCLFGWW). Topologically, residues 827 to 838 (SQNWNDIVTVVR) are extracellular. A helical membrane pass occupies residues 839 to 855 (VWIFSFGVFCVMGGAYY). At 856 to 899 (MMSESEAFDRFMNGKSRRDKPSGRSVEDFLMAMQRVSTQHEKEN) the chain is on the cytoplasmic side.

This sequence belongs to the cation transport ATPase (P-type) (TC 3.A.3) family. Type IIIA subfamily.

Its subcellular location is the cell membrane. The enzyme catalyses ATP + H2O + H(+)(in) = ADP + phosphate + 2 H(+)(out). Its activity is regulated as follows. Activated by high pH or also by potassium ions when the medium pH is low. The plasma membrane ATPase of plants and fungi is a hydrogen ion pump. The proton gradient it generates drives the active transport of nutrients by H(+)-symport. The resulting external acidification and/or internal alkinization may mediate growth responses. The sequence is that of Plasma membrane ATPase (PMA1) from Kluyveromyces lactis (strain ATCC 8585 / CBS 2359 / DSM 70799 / NBRC 1267 / NRRL Y-1140 / WM37) (Yeast).